Reading from the N-terminus, the 398-residue chain is Phosphoglycerate kinase (398 aa).

Residues Asp21–Asn23, Arg41, His64–Arg67, Arg123, and Arg156 each bind substrate. ATP contacts are provided by residues Lys207, Gly294, Glu325, and Gly354–Ser357.

It belongs to the phosphoglycerate kinase family. Monomer.

It localises to the cytoplasm. It carries out the reaction (2R)-3-phosphoglycerate + ATP = (2R)-3-phospho-glyceroyl phosphate + ADP. It participates in carbohydrate degradation; glycolysis; pyruvate from D-glyceraldehyde 3-phosphate: step 2/5. In Salinibacter ruber (strain DSM 13855 / M31), this protein is Phosphoglycerate kinase.